A 727-amino-acid polypeptide reads, in one-letter code: LIM domain-binding protein 3 (727 aa).

A PDZ domain is found at 1–84; that stretch reads MSYSVTLTGP…NLSLTLQKSK (84 aa). Phosphoserine occurs at positions 44, 121, and 123. Residues 86–197 are disordered; the sequence is PIPISTTAPP…GSSQPRQYNN (112 aa). The segment covering 140–156 has biased composition (low complexity); it reads PTFSPAFSRPSAFSSLA. A compositionally biased stretch (polar residues) spans 188–197; that stretch reads GSSQPRQYNN. The residue at position 217 (serine 217) is a Phosphoserine. Arginine 219 carries the post-translational modification Omega-N-methylarginine. Serine 223 carries the phosphoserine modification. Disordered regions lie at residues 284–440 and 472–529; these read TEFM…YTPS and APSV…PQVP. Residues 312-385 show a composition bias toward low complexity; the sequence is ATTPLLPASA…SAPATHTSYS (74 aa). Pro residues predominate over residues 428 to 440; it reads PYTPSPAPAYTPS. Positions 494–513 are enriched in polar residues; that stretch reads DSFSQKFAPGKSTTSISKQT. Omega-N-methylarginine occurs at positions 516 and 533. 3 consecutive LIM zinc-binding domains span residues 549–607, 608–667, and 668–727; these read PLCG…QFFA, PLCA…LFST, and KCHG…TINL.

Interacts via its LIM domains with various PKC isoforms. Interacts via its PDZ domain with the ACTN2 C-terminal region. Interacts with MYOZ1, MYOZ2 and MYOZ3. As to expression, expressed primarily in skeletal muscle and to a lesser extent in heart. Also detected in brain and placenta.

Its subcellular location is the cytoplasm. It localises to the perinuclear region. The protein localises to the cell projection. The protein resides in the pseudopodium. It is found in the cytoskeleton. Its subcellular location is the myofibril. It localises to the sarcomere. The protein localises to the z line. Functionally, may function as an adapter in striated muscle to couple protein kinase C-mediated signaling via its LIM domains to the cytoskeleton. This chain is LIM domain-binding protein 3, found in Homo sapiens (Human).